The primary structure comprises 320 residues: Cytochrome f (320 aa).

Residues 1–35 (MQTRNAFSCIKEGITRSISISVMIYIIIRAPFSNA) form the signal peptide. Residues tyrosine 36, cysteine 56, cysteine 59, and histidine 60 each coordinate heme. A helical transmembrane segment spans residues 286–306 (VQGLLFFLASIILAQIFLVLK).

The protein belongs to the cytochrome f family. In terms of assembly, the 4 large subunits of the cytochrome b6-f complex are cytochrome b6, subunit IV (17 kDa polypeptide, petD), cytochrome f and the Rieske protein, while the 4 small subunits are PetG, PetL, PetM and PetN. The complex functions as a dimer. It depends on heme as a cofactor.

The protein resides in the plastid. Its subcellular location is the chloroplast thylakoid membrane. Functionally, component of the cytochrome b6-f complex, which mediates electron transfer between photosystem II (PSII) and photosystem I (PSI), cyclic electron flow around PSI, and state transitions. The sequence is that of Cytochrome f from Phaseolus vulgaris (Kidney bean).